Reading from the N-terminus, the 179-residue chain is Large ribosomal subunit protein bL17 (179 aa).

Positions 127-179 (TDTLPDTVIDTGPDSAPDPVPGSEPGSAAGDLPDADTAPADPGESSSNQRVIR) are disordered. The span at 154-168 (AAGDLPDADTAPADP) shows a compositional bias: low complexity. Positions 170-179 (ESSSNQRVIR) are enriched in polar residues.

It belongs to the bacterial ribosomal protein bL17 family. Part of the 50S ribosomal subunit. Contacts protein L32.

The sequence is that of Large ribosomal subunit protein bL17 from Tropheryma whipplei (strain TW08/27) (Whipple's bacillus).